A 119-amino-acid polypeptide reads, in one-letter code: Large ribosomal subunit protein eL8 (119 aa).

This sequence belongs to the eukaryotic ribosomal protein eL8 family. As to quaternary structure, part of the 50S ribosomal subunit. Probably part of the RNase P complex.

It localises to the cytoplasm. In terms of biological role, multifunctional RNA-binding protein that recognizes the K-turn motif in ribosomal RNA, the RNA component of RNase P, box H/ACA, box C/D and box C'/D' sRNAs. The polypeptide is Large ribosomal subunit protein eL8 (Archaeoglobus fulgidus (strain ATCC 49558 / DSM 4304 / JCM 9628 / NBRC 100126 / VC-16)).